The following is a 373-amino-acid chain: Protein-glutamate methylesterase/protein-glutamine glutaminase 1 (373 aa).

Residues 16–133 (RVVVVDDSAL…ASGLTELSDQ (118 aa)) form the Response regulatory domain. Asp-67 bears the 4-aspartylphosphate mark. The CheB-type methylesterase domain occupies 175–367 (RVSTEKLICI…PALIAKLSSA (193 aa)). Residues Ser-187, His-213, and Asp-309 contribute to the active site.

The protein belongs to the CheB family. Post-translationally, phosphorylated by CheA. Phosphorylation of the N-terminal regulatory domain activates the methylesterase activity.

Its subcellular location is the cytoplasm. The enzyme catalyses [protein]-L-glutamate 5-O-methyl ester + H2O = L-glutamyl-[protein] + methanol + H(+). It catalyses the reaction L-glutaminyl-[protein] + H2O = L-glutamyl-[protein] + NH4(+). Functionally, involved in chemotaxis. Part of a chemotaxis signal transduction system that modulates chemotaxis in response to various stimuli. Catalyzes the demethylation of specific methylglutamate residues introduced into the chemoreceptors (methyl-accepting chemotaxis proteins or MCP) by CheR. Also mediates the irreversible deamidation of specific glutamine residues to glutamic acid. The chain is Protein-glutamate methylesterase/protein-glutamine glutaminase 1 from Albidiferax ferrireducens (strain ATCC BAA-621 / DSM 15236 / T118) (Rhodoferax ferrireducens).